A 276-amino-acid polypeptide reads, in one-letter code: Ribosomal RNA small subunit methyltransferase A (276 aa).

Residues Asn27, Leu29, Gly54, Glu75, Asp101, and Asn122 each coordinate S-adenosyl-L-methionine.

It belongs to the class I-like SAM-binding methyltransferase superfamily. rRNA adenine N(6)-methyltransferase family. RsmA subfamily.

The protein localises to the cytoplasm. The enzyme catalyses adenosine(1518)/adenosine(1519) in 16S rRNA + 4 S-adenosyl-L-methionine = N(6)-dimethyladenosine(1518)/N(6)-dimethyladenosine(1519) in 16S rRNA + 4 S-adenosyl-L-homocysteine + 4 H(+). In terms of biological role, specifically dimethylates two adjacent adenosines (A1518 and A1519) in the loop of a conserved hairpin near the 3'-end of 16S rRNA in the 30S particle. May play a critical role in biogenesis of 30S subunits. The protein is Ribosomal RNA small subunit methyltransferase A of Brucella melitensis biotype 1 (strain ATCC 23456 / CCUG 17765 / NCTC 10094 / 16M).